Reading from the N-terminus, the 2013-residue chain is Cell adhesion molecule DSCAM (2013 aa).

Residues 1 to 17 (MWILALSLFQSFANVFS) form the signal peptide. Residues 18–1594 (EEPHSSLYFV…EGLTTNEGLK (1577 aa)) lie on the Extracellular side of the membrane. Ig-like C2-type domains are found at residues 20-119 (PHSS…VHIK), 125-216 (PYTV…ARLF), 225-305 (PSIL…AKVI), 313-401 (PLKA…VQVV), 407-500 (PKII…ARIN), 504-592 (PASI…VHVT), 596-685 (PPFI…SQLI), 690-783 (PKFV…MYLT), and 787-883 (PAMI…LTVQ). Disulfide bonds link Cys46/Cys102, Cys145/Cys197, Cys246/Cys293, Cys335/Cys385, Cys428/Cys484, Cys525/Cys575, Cys617/Cys669, Cys711/Cys766, and Cys809/Cys865. An N-linked (GlcNAc...) asparagine glycan is attached at Asn78. Residue Asn470 is glycosylated (N-linked (GlcNAc...) asparagine). Asn666 carries N-linked (GlcNAc...) asparagine glycosylation. 4 consecutive Fibronectin type-III domains span residues 885–982 (PPDP…ADEA), 987–1086 (PPQE…TLED), 1091–1187 (PPEN…TKED), and 1191–1285 (PPAG…AKAP). 2 N-linked (GlcNAc...) asparagine glycosylation sites follow: Asn1160 and Asn1250. The region spanning 1285-1377 (PARILTFSGT…DEIILNLQVQ (93 aa)) is the Ig-like C2-type 10 domain. An intrachain disulfide couples Cys1307 to Cys1359. Fibronectin type-III domains follow at residues 1379–1473 (PPDQ…TLGK) and 1474–1575 (EPQF…TIPP). A helical transmembrane segment spans residues 1595–1615 (ILVTISCILVGVLLLFVLLLV). At 1616 to 2013 (VRRRRREQRL…NPYAKSYTLV (398 aa)) the chain is on the cytoplasmic side. The tract at residues 1616-2013 (VRRRRREQRL…NPYAKSYTLV (398 aa)) is required for netrin-mediated axon repulsion of neuronal growth cones. Disordered regions lie at residues 1718 to 1809 (LVDV…SASS) and 1920 to 2013 (RDLS…YTLV). Residues 1799–1809 (SSMVSTESASS) are compositionally biased toward low complexity. The span at 1949–1968 (EASSSTSSTREGQQSWQQGA) shows a compositional bias: polar residues.

Homodimer; mediates homophilic interactions to promote cell adhesion. Interacts with DCC; the interaction is abolished in response to NTN1. Interacts (via extracellular domain) with NTN1. Interacts (via extracellular domain) with UNC5C (via Ig-like C2-type domain). Interacts with PTK2. Interacts with FYN. In terms of processing, phosphorylated at tyrosine residues. Phosphorylation is enhanced by NTN1. In terms of tissue distribution, expressed in cortical and cerebellar neurons, in cells of the external and internal granular layer and of the Purkinje cell layer (at protein level). In the retina, expressed in dopaminergic and Nos1-positive amacrine cells and most retinal ganglion cells (at protein level). Expressed in the brain with highest levels in the cortex, olfactory bulb, hippocampus, thalamus, cerebellum and spinal cord. Expressed in the retinal ganglion layer (RGL).

It localises to the cell membrane. The protein localises to the cell projection. It is found in the axon. Its subcellular location is the synapse. The protein resides in the dendrite. It localises to the growth cone. Functionally, cell adhesion molecule that plays a role in neuronal self-avoidance. Promotes repulsion between specific neuronal processes of either the same cell or the same subtype of cells. Mediates within retinal amacrine and ganglion cell subtypes both isoneuronal self-avoidance for creating an orderly dendritic arborization and heteroneuronal self-avoidance to maintain the mosaic spacing between amacrine and ganglion cell bodies. Receptor for netrin required for axon guidance independently of and in collaboration with the receptor DCC. Might also collaborate with UNC5C in NTN1-mediated axon repulsion independently of DCC. In spinal cord development plays a role in guiding commissural axons projection and pathfinding across the ventral midline to reach the floor plate upon ligand binding. Mediates intracellular signaling by stimulating the activation of MAPK8 and MAP kinase p38. Adhesion molecule that promotes lamina-specific synaptic connections in the retina: expressed in specific subsets of interneurons and retinal ganglion cells (RGCs) and promotes synaptic connectivity via homophilic interactions. This Mus musculus (Mouse) protein is Cell adhesion molecule DSCAM (Dscam).